Reading from the N-terminus, the 397-residue chain is 1-deoxy-D-xylulose 5-phosphate reductoisomerase (397 aa).

Threonine 17, glycine 18, serine 19, isoleucine 20, asparagine 47, and asparagine 130 together coordinate NADPH. Lysine 131 is a 1-deoxy-D-xylulose 5-phosphate binding site. Glutamate 132 serves as a coordination point for NADPH. Aspartate 156 provides a ligand contact to Mn(2+). Serine 157, glutamate 158, serine 182, and histidine 205 together coordinate 1-deoxy-D-xylulose 5-phosphate. Glutamate 158 is a Mn(2+) binding site. Glycine 211 serves as a coordination point for NADPH. 1-deoxy-D-xylulose 5-phosphate contacts are provided by serine 218, asparagine 223, lysine 224, and glutamate 227. Glutamate 227 contacts Mn(2+).

It belongs to the DXR family. Mg(2+) is required as a cofactor. Requires Mn(2+) as cofactor.

It catalyses the reaction 2-C-methyl-D-erythritol 4-phosphate + NADP(+) = 1-deoxy-D-xylulose 5-phosphate + NADPH + H(+). The protein operates within isoprenoid biosynthesis; isopentenyl diphosphate biosynthesis via DXP pathway; isopentenyl diphosphate from 1-deoxy-D-xylulose 5-phosphate: step 1/6. Its function is as follows. Catalyzes the NADPH-dependent rearrangement and reduction of 1-deoxy-D-xylulose-5-phosphate (DXP) to 2-C-methyl-D-erythritol 4-phosphate (MEP). The polypeptide is 1-deoxy-D-xylulose 5-phosphate reductoisomerase (Allorhizobium ampelinum (strain ATCC BAA-846 / DSM 112012 / S4) (Agrobacterium vitis (strain S4))).